Reading from the N-terminus, the 154-residue chain is MPHPLLPDLETLASATATGKGYKLCCVQVFTHLIPMTIQVQIRRKDGSDVSLDDCAHFSASMDEALEASQLFTEAYVLEISSPGIGDQLHSDQDFLTFRGFPVEISFRDDDSDLHQAGLLHKRSDEHVHINIKGRIQRIPRKAVTCVRLTNPTG.

Belongs to the RimP family.

The protein localises to the cytoplasm. Its function is as follows. Required for maturation of 30S ribosomal subunits. The protein is Ribosome maturation factor RimP of Prochlorococcus marinus (strain MIT 9303).